The primary structure comprises 211 residues: V-type ATP synthase subunit D (211 aa).

Belongs to the V-ATPase D subunit family.

Produces ATP from ADP in the presence of a proton gradient across the membrane. In Fusobacterium nucleatum subsp. nucleatum (strain ATCC 25586 / DSM 15643 / BCRC 10681 / CIP 101130 / JCM 8532 / KCTC 2640 / LMG 13131 / VPI 4355), this protein is V-type ATP synthase subunit D.